The following is a 359-amino-acid chain: Outer membrane protein P2 (359 aa).

The first 20 residues, 1 to 20 (MKKTLAALIVGAFAASAANA), serve as a signal peptide directing secretion.

It belongs to the Gram-negative porin family. In terms of assembly, homotrimer.

It is found in the cell outer membrane. Forms pores that allow passive diffusion of small molecules across the outer membrane. This is Outer membrane protein P2 (ompP2) from Haemophilus influenzae (strain ATCC 51907 / DSM 11121 / KW20 / Rd).